We begin with the raw amino-acid sequence, 459 residues long: tRNA modification GTPase MnmE (459 aa).

(6S)-5-formyl-5,6,7,8-tetrahydrofolate-binding residues include Arg22, Glu85, and Arg124. Positions 221–380 (GLSTVIVGKP…LEIQIRDLFF (160 aa)) constitute a TrmE-type G domain. Asn231 serves as a coordination point for K(+). GTP is bound by residues 231–236 (NVGKSS), 250–256 (TEVAGTT), and 275–278 (DTAG). Ser235 contacts Mg(2+). Positions 250, 252, and 255 each coordinate K(+). Thr256 contributes to the Mg(2+) binding site. (6S)-5-formyl-5,6,7,8-tetrahydrofolate is bound at residue Lys459.

This sequence belongs to the TRAFAC class TrmE-Era-EngA-EngB-Septin-like GTPase superfamily. TrmE GTPase family. Homodimer. Heterotetramer of two MnmE and two MnmG subunits. Requires K(+) as cofactor.

It localises to the cytoplasm. Functionally, exhibits a very high intrinsic GTPase hydrolysis rate. Involved in the addition of a carboxymethylaminomethyl (cmnm) group at the wobble position (U34) of certain tRNAs, forming tRNA-cmnm(5)s(2)U34. This Staphylococcus aureus (strain bovine RF122 / ET3-1) protein is tRNA modification GTPase MnmE.